A 344-amino-acid chain; its full sequence is GDSL esterase/lipase At5g03590 (344 aa).

Residues 1 to 19 (MHYLMKLFFSLSLFFGING) form the signal peptide. The active-site Nucleophile is the S41. N126, N227, and N238 each carry an N-linked (GlcNAc...) asparagine glycan. Residue D318 is part of the active site.

Belongs to the 'GDSL' lipolytic enzyme family.

The protein localises to the secreted. The polypeptide is GDSL esterase/lipase At5g03590 (Arabidopsis thaliana (Mouse-ear cress)).